The sequence spans 377 residues: Alanine racemase (377 aa).

Residue lysine 37 is the Proton acceptor; specific for D-alanine of the active site. Lysine 37 is modified (N6-(pyridoxal phosphate)lysine). Arginine 135 contacts substrate. Tyrosine 271 serves as the catalytic Proton acceptor; specific for L-alanine. Methionine 319 is a substrate binding site.

It belongs to the alanine racemase family. It depends on pyridoxal 5'-phosphate as a cofactor.

It catalyses the reaction L-alanine = D-alanine. The protein operates within amino-acid biosynthesis; D-alanine biosynthesis; D-alanine from L-alanine: step 1/1. Its function is as follows. Catalyzes the interconversion of L-alanine and D-alanine. May also act on other amino acids. The polypeptide is Alanine racemase (alr) (Helicobacter pylori (strain P12)).